We begin with the raw amino-acid sequence, 174 residues long: RNA pyrophosphohydrolase (174 aa).

The Nudix hydrolase domain occupies 6 to 149; the sequence is GYRPNVGIIL…KRDVYLGALK (144 aa). The Nudix box signature appears at 38–59; the sequence is GGIKPGESPETAMYRELYEEVG.

Belongs to the Nudix hydrolase family. RppH subfamily. Requires a divalent metal cation as cofactor.

Its function is as follows. Accelerates the degradation of transcripts by removing pyrophosphate from the 5'-end of triphosphorylated RNA, leading to a more labile monophosphorylated state that can stimulate subsequent ribonuclease cleavage. This chain is RNA pyrophosphohydrolase, found in Neisseria meningitidis serogroup B (strain ATCC BAA-335 / MC58).